The chain runs to 396 residues: Aspartate aminotransferase (396 aa).

The L-aspartate site is built by glycine 34, tryptophan 130, and asparagine 183. At lysine 246 the chain carries N6-(pyridoxal phosphate)lysine. Residue arginine 374 participates in L-aspartate binding.

It belongs to the class-I pyridoxal-phosphate-dependent aminotransferase family. Homodimer. Requires pyridoxal 5'-phosphate as cofactor.

It localises to the cytoplasm. It catalyses the reaction L-aspartate + 2-oxoglutarate = oxaloacetate + L-glutamate. The polypeptide is Aspartate aminotransferase (aspC) (Haemophilus influenzae (strain ATCC 51907 / DSM 11121 / KW20 / Rd)).